The chain runs to 332 residues: Elongin-A (332 aa).

Residues 24-68 (LEDIGHMPYALVRRVLLKMSAEQLLRLERASPALLLEDEEAWQQL) enclose the F-box domain. Residues 228–332 (TPSAQPAASL…KPRVYIHTPR (105 aa)) are disordered. Polar residues predominate over residues 296–309 (LFSSPALSTLLPQQ). Positions 320–332 (PPKKPRVYIHTPR) are enriched in basic residues.

The protein belongs to the ELA1 family. In terms of assembly, heterodimer with ELC1. Component of a CRL3 E3 ubiquitin ligase complex consisting of a cullin, the linker protein ELC1, the substrate receptor ELA1, and a RING protein. Interacts with the large RNA polymerase II subunit RPO21 in a manner dependent on DEF1.

As part of the CRL3 E3 ubiquitin ligase complex; polyubiquitylates monoubiquitylated RNA polymerase II subunit RPO21 to trigger its proteolysis; plays a role in global genomic repair. The polypeptide is Elongin-A (ELA1) (Eremothecium gossypii (strain ATCC 10895 / CBS 109.51 / FGSC 9923 / NRRL Y-1056) (Yeast)).